A 223-amino-acid chain; its full sequence is Small ribosomal subunit protein uS3 (223 aa).

The KH type-2 domain maps to 39–117 (IREHLRKKPS…RPELNAKLVA (79 aa)).

Belongs to the universal ribosomal protein uS3 family. Part of the 30S ribosomal subunit. Forms a tight complex with proteins S10 and S14.

Binds the lower part of the 30S subunit head. Binds mRNA in the 70S ribosome, positioning it for translation. This Chlamydia felis (strain Fe/C-56) (Chlamydophila felis) protein is Small ribosomal subunit protein uS3.